We begin with the raw amino-acid sequence, 1025 residues long: Error-prone DNA polymerase (1025 aa).

It belongs to the DNA polymerase type-C family. DnaE2 subfamily.

The protein resides in the cytoplasm. The enzyme catalyses DNA(n) + a 2'-deoxyribonucleoside 5'-triphosphate = DNA(n+1) + diphosphate. Functionally, DNA polymerase involved in damage-induced mutagenesis and translesion synthesis (TLS). It is not the major replicative DNA polymerase. The protein is Error-prone DNA polymerase of Alkalilimnicola ehrlichii (strain ATCC BAA-1101 / DSM 17681 / MLHE-1).